We begin with the raw amino-acid sequence, 379 residues long: Ribosomal RNA small subunit methyltransferase H (379 aa).

S-adenosyl-L-methionine is bound by residues glycine 71–histidine 73, glutamate 90, aspartate 157, and histidine 164.

Belongs to the methyltransferase superfamily. RsmH family.

It localises to the cytoplasm. It catalyses the reaction cytidine(1402) in 16S rRNA + S-adenosyl-L-methionine = N(4)-methylcytidine(1402) in 16S rRNA + S-adenosyl-L-homocysteine + H(+). Functionally, specifically methylates the N4 position of cytidine in position 1402 (C1402) of 16S rRNA. The chain is Ribosomal RNA small subunit methyltransferase H from Treponema pallidum (strain Nichols).